Here is a 497-residue protein sequence, read N- to C-terminus: Acetyl-coenzyme A carboxylase carboxyl transferase subunit beta, chloroplastic (497 aa).

In terms of domain architecture, CoA carboxyltransferase N-terminal spans 230–497; the sequence is LWVQCENCYG…FFPLNQNSIK (268 aa). The Zn(2+) site is built by Cys234, Cys237, Cys253, and Cys256. The segment at 234–256 adopts a C4-type zinc-finger fold; it reads CENCYGLNYKKFLKSKMNICEQC.

It belongs to the AccD/PCCB family. As to quaternary structure, acetyl-CoA carboxylase is a heterohexamer composed of biotin carboxyl carrier protein, biotin carboxylase and 2 subunits each of ACCase subunit alpha and ACCase plastid-coded subunit beta (accD). Requires Zn(2+) as cofactor.

Its subcellular location is the plastid. The protein resides in the chloroplast stroma. It carries out the reaction N(6)-carboxybiotinyl-L-lysyl-[protein] + acetyl-CoA = N(6)-biotinyl-L-lysyl-[protein] + malonyl-CoA. Its pathway is lipid metabolism; malonyl-CoA biosynthesis; malonyl-CoA from acetyl-CoA: step 1/1. In terms of biological role, component of the acetyl coenzyme A carboxylase (ACC) complex. Biotin carboxylase (BC) catalyzes the carboxylation of biotin on its carrier protein (BCCP) and then the CO(2) group is transferred by the transcarboxylase to acetyl-CoA to form malonyl-CoA. The chain is Acetyl-coenzyme A carboxylase carboxyl transferase subunit beta, chloroplastic from Carica papaya (Papaya).